The sequence spans 214 residues: Adenylate kinase (214 aa).

10 to 15 (GAGKGT) provides a ligand contact to ATP. An NMP region spans residues 30-59 (STGDMLRAAVKAGSELGLKAKEIMDAGKLV). AMP contacts are provided by residues Thr-31, Arg-36, 57-59 (KLV), 85-88 (GFPR), and Gln-92. The LID stretch occupies residues 122–159 (GRRVHAPSGRVYHVTFNPPRVEGKDDMTGEELTTRKDD). Residues Arg-123 and 132 to 133 (VY) each bind ATP. AMP contacts are provided by Arg-156 and Arg-167. Residue Arg-200 coordinates ATP.

This sequence belongs to the adenylate kinase family. In terms of assembly, monomer.

The protein localises to the cytoplasm. It carries out the reaction AMP + ATP = 2 ADP. It participates in purine metabolism; AMP biosynthesis via salvage pathway; AMP from ADP: step 1/1. Functionally, catalyzes the reversible transfer of the terminal phosphate group between ATP and AMP. Plays an important role in cellular energy homeostasis and in adenine nucleotide metabolism. The sequence is that of Adenylate kinase from Erwinia tasmaniensis (strain DSM 17950 / CFBP 7177 / CIP 109463 / NCPPB 4357 / Et1/99).